A 268-amino-acid polypeptide reads, in one-letter code: Glutamate racemase (268 aa).

Substrate-binding positions include 13–14 and 45–46; these read DS and YG. Residue cysteine 77 is the Proton donor/acceptor of the active site. 78 to 79 serves as a coordination point for substrate; the sequence is NT. Cysteine 185 functions as the Proton donor/acceptor in the catalytic mechanism. 186-187 serves as a coordination point for substrate; sequence TH.

The protein belongs to the aspartate/glutamate racemases family.

The catalysed reaction is L-glutamate = D-glutamate. It participates in cell wall biogenesis; peptidoglycan biosynthesis. Provides the (R)-glutamate required for cell wall biosynthesis. This chain is Glutamate racemase, found in Vibrio campbellii (strain ATCC BAA-1116).